The chain runs to 234 residues: Probable chemoreceptor glutamine deamidase CheD (234 aa).

Belongs to the CheD family.

The enzyme catalyses L-glutaminyl-[protein] + H2O = L-glutamyl-[protein] + NH4(+). In terms of biological role, probably deamidates glutamine residues to glutamate on methyl-accepting chemotaxis receptors (MCPs), playing an important role in chemotaxis. The polypeptide is Probable chemoreceptor glutamine deamidase CheD (Burkholderia mallei (strain NCTC 10247)).